The sequence spans 1057 residues: Desmoglein-1-alpha (1057 aa).

The first 23 residues, 1–23 (MDWHSFRIAALLLTSLVVLEVNS), serve as a signal peptide directing secretion. A propeptide spanning residues 24 to 49 (EFQIQVRDHNAKNGTIKWHSIRRQKR) is cleaved from the precursor. Cadherin domains follow at residues 50–157 (EWIK…PPVF), 158–269 (SMTT…IPYL), 270–389 (EQSS…RPGS), and 386–493 (RPGS…TGSE). At 50-564 (EWIKFAAACR…LYGDNVHFGP (515 aa)) the chain is on the extracellular side. N-linked (GlcNAc...) asparagine glycosylation is found at Asn-110 and Asn-180. A disordered region spans residues 490-552 (TGSESGGSSS…FQGDPDETLE (63 aa)). Polar residues predominate over residues 510 to 525 (NGYQGTSSTENPQRVT). The chain crosses the membrane as a helical span at residues 565–585 (AGIGLLIMGFLVLGLVPFLLI). At 586-1057 (CCDCGGAPGG…TKYNTVQYSK (472 aa)) the chain is on the cytoplasmic side. Desmoglein repeat repeat units lie at residues 832 to 858 (AYHS…TVRE), 859 to 888 (SYTT…ERVV), 889 to 918 (GPIS…ERVI), 919 to 946 (APGS…ERVI), and 947 to 975 (QPTS…ERVV).

As to quaternary structure, binds to JUP/plakoglobin. Interacts with PKP2. Interacts with DSC3; there is evidence to suggest that the interaction promotes cell-cell adhesion of keratinocytes. As to expression, expressed in testis.

Its subcellular location is the cell membrane. The protein resides in the cell junction. The protein localises to the desmosome. It is found in the cytoplasm. It localises to the nucleus. Component of intercellular desmosome junctions. Involved in the interaction of plaque proteins and intermediate filaments mediating cell-cell adhesion. The sequence is that of Desmoglein-1-alpha (Dsg1a) from Mus musculus (Mouse).